Consider the following 483-residue polypeptide: Acyl-coenzyme A thioesterase 2, mitochondrial (483 aa).

K104 carries the N6-acetyllysine modification. Active-site charge relay system residues include S294, D388, and H422. K470 bears the N6-succinyllysine mark. The short motif at 481–483 (SKV) is the Microbody targeting signal element.

Belongs to the C/M/P thioester hydrolase family. As to quaternary structure, monomer. Strongest expression in heart, liver, muscle and kidney. Weak in placenta and pancreas.

Its subcellular location is the mitochondrion. It catalyses the reaction hexadecanoyl-CoA + H2O = hexadecanoate + CoA + H(+). It carries out the reaction tetradecanoyl-CoA + H2O = tetradecanoate + CoA + H(+). The catalysed reaction is octadecanoyl-CoA + H2O = octadecanoate + CoA + H(+). The enzyme catalyses eicosanoyl-CoA + H2O = eicosanoate + CoA + H(+). It catalyses the reaction decanoyl-CoA + H2O = decanoate + CoA + H(+). It carries out the reaction dodecanoyl-CoA + H2O = dodecanoate + CoA + H(+). The catalysed reaction is (9Z)-octadecenoyl-CoA + H2O = (9Z)-octadecenoate + CoA + H(+). The enzyme catalyses (9Z)-hexadecenoyl-CoA + H2O = (9Z)-hexadecenoate + CoA + H(+). It catalyses the reaction (9E)-octadecenoyl-CoA + H2O = (9E)-octadecenoate + CoA + H(+). It carries out the reaction (9Z,12Z)-octadecadienoyl-CoA + H2O = (9Z,12Z)-octadecadienoate + CoA + H(+). The protein operates within lipid metabolism; fatty acid metabolism. Its function is as follows. Catalyzes the hydrolysis of acyl-CoAs into free fatty acids and coenzyme A (CoASH), regulating their respective intracellular levels. Displays higher activity toward long chain acyl CoAs (C14-C20). The enzyme is involved in enhancing the hepatic fatty acid oxidation in mitochondria. This chain is Acyl-coenzyme A thioesterase 2, mitochondrial (ACOT2), found in Homo sapiens (Human).